Here is a 227-residue protein sequence, read N- to C-terminus: ATP-dependent dethiobiotin synthetase BioD (227 aa).

13–18 (DVGKTV) lines the ATP pocket. Thr-17 is a Mg(2+) binding site. The active site involves Lys-38. ATP-binding positions include Asp-55, 116-119 (EGAG), and 176-177 (NR). Mg(2+)-binding residues include Asp-55 and Glu-116.

Belongs to the dethiobiotin synthetase family. Homodimer. Mg(2+) is required as a cofactor.

It is found in the cytoplasm. The enzyme catalyses (7R,8S)-7,8-diammoniononanoate + CO2 + ATP = (4R,5S)-dethiobiotin + ADP + phosphate + 3 H(+). It participates in cofactor biosynthesis; biotin biosynthesis; biotin from 7,8-diaminononanoate: step 1/2. In terms of biological role, catalyzes a mechanistically unusual reaction, the ATP-dependent insertion of CO2 between the N7 and N8 nitrogen atoms of 7,8-diaminopelargonic acid (DAPA, also called 7,8-diammoniononanoate) to form a ureido ring. In Aliivibrio salmonicida (strain LFI1238) (Vibrio salmonicida (strain LFI1238)), this protein is ATP-dependent dethiobiotin synthetase BioD.